We begin with the raw amino-acid sequence, 789 residues long: UPF0313 protein VC_1711 (789 aa).

A Radical SAM core domain is found at Ala-363 to Ala-642. 3 residues coordinate [4Fe-4S] cluster: Cys-377, Cys-381, and Cys-384. The segment at Pro-669–Arg-789 is disordered. Positions Lys-683 to His-698 are enriched in basic residues. 3 stretches are compositionally biased toward polar residues: residues Arg-716–Gly-726, Pro-733–Ser-763, and Arg-778–Arg-789.

The protein belongs to the UPF0313 family. The cofactor is [4Fe-4S] cluster.

This chain is UPF0313 protein VC_1711, found in Vibrio cholerae serotype O1 (strain ATCC 39315 / El Tor Inaba N16961).